The following is a 581-amino-acid chain: Ketol-acid reductoisomerase, chloroplastic (581 aa).

A chloroplast-targeting transit peptide spans 1–50 (MAAVTSSCSTAISASSKTLAKPVAASFAPTNLSFSKLSPQSIRARRSITV). The 199-residue stretch at 92–290 (VRGGRDLFHL…ALGSPFTFAT (199 aa)) folds into the KARI N-terminal Rossmann domain. NADP(+)-binding positions include 113-120 (GVIGWGSQ), 146-151 (RKGSSS), and 185-189 (SDSAQ). Residue His-210 is part of the active site. 2 consecutive KARI C-terminal knotted domains span residues 291–439 (TLEQ…RPAG) and 440–576 (DLGP…RPEL). Residues Asp-299, Glu-303, Glu-476, and Glu-480 each coordinate Mg(2+). Ser-502 provides a ligand contact to substrate.

The protein belongs to the ketol-acid reductoisomerase family. In terms of assembly, homodimer. Mg(2+) serves as cofactor.

Its subcellular location is the plastid. It localises to the chloroplast. It catalyses the reaction (2R)-2,3-dihydroxy-3-methylbutanoate + NADP(+) = (2S)-2-acetolactate + NADPH + H(+). The catalysed reaction is (2R,3R)-2,3-dihydroxy-3-methylpentanoate + NADP(+) = (S)-2-ethyl-2-hydroxy-3-oxobutanoate + NADPH + H(+). It functions in the pathway amino-acid biosynthesis; L-isoleucine biosynthesis; L-isoleucine from 2-oxobutanoate: step 2/4. Its pathway is amino-acid biosynthesis; L-valine biosynthesis; L-valine from pyruvate: step 2/4. The polypeptide is Ketol-acid reductoisomerase, chloroplastic (PGAAIR) (Pisum sativum (Garden pea)).